Reading from the N-terminus, the 207-residue chain is Small ribosomal subunit protein uS4c (207 aa).

An S4 RNA-binding domain is found at 92–153 (MRLDNILFRL…PKIYQSIITK (62 aa)).

It belongs to the universal ribosomal protein uS4 family. As to quaternary structure, part of the 30S ribosomal subunit. Contacts protein S5. The interaction surface between S4 and S5 is involved in control of translational fidelity.

The protein resides in the plastid. Its subcellular location is the chloroplast. In terms of biological role, one of the primary rRNA binding proteins, it binds directly to 16S rRNA where it nucleates assembly of the body of the 30S subunit. Functionally, with S5 and S12 plays an important role in translational accuracy. This is Small ribosomal subunit protein uS4c (rps4) from Equisetum bogotense (Horsetail).